The primary structure comprises 37 residues: Mu-agatoxin-Aa1f (37 aa).

Intrachain disulfides connect Cys2–Cys18, Cys9–Cys23, Cys17–Cys33, and Cys25–Cys31. At Asn37 the chain carries Asparagine amide.

This sequence belongs to the neurotoxin 07 (Beta/delta-agtx) family. 03 (aga-4) subfamily. Aga sub-subfamily. Expressed by the venom gland.

The protein resides in the secreted. Its function is as follows. Insecticidal neurotoxin that induces an irreversible spastic paralysis when injected into insects. Modifies presynaptic voltage-gated sodium channels (Nav), causing them to open at the normal resting potential of the nerve. This leads to spontaneous release of neurotransmitter and repetitive action potentials in motor neurons. In Agelenopsis aperta (North American funnel-web spider), this protein is Mu-agatoxin-Aa1f.